The sequence spans 257 residues: Phosphonates import ATP-binding protein PhnC 1 (257 aa).

The region spanning 2-246 (IELKNVSKVY…VFKDIYGRPL (245 aa)) is the ABC transporter domain. ATP is bound at residue 35–42 (GLSGAGKS).

It belongs to the ABC transporter superfamily. Phosphonates importer (TC 3.A.1.9.1) family. As to quaternary structure, the complex is composed of two ATP-binding proteins (PhnC), two transmembrane proteins (PhnE) and a solute-binding protein (PhnD).

The protein resides in the cell membrane. It catalyses the reaction phosphonate(out) + ATP + H2O = phosphonate(in) + ADP + phosphate + H(+). Its function is as follows. Part of the ABC transporter complex PhnCDE involved in phosphonates import. Responsible for energy coupling to the transport system. The protein is Phosphonates import ATP-binding protein PhnC 1 of Halalkalibacterium halodurans (strain ATCC BAA-125 / DSM 18197 / FERM 7344 / JCM 9153 / C-125) (Bacillus halodurans).